The primary structure comprises 235 residues: Phosphoribosylaminoimidazole-succinocarboxamide synthase (235 aa).

The protein belongs to the SAICAR synthetase family.

The enzyme catalyses 5-amino-1-(5-phospho-D-ribosyl)imidazole-4-carboxylate + L-aspartate + ATP = (2S)-2-[5-amino-1-(5-phospho-beta-D-ribosyl)imidazole-4-carboxamido]succinate + ADP + phosphate + 2 H(+). The protein operates within purine metabolism; IMP biosynthesis via de novo pathway; 5-amino-1-(5-phospho-D-ribosyl)imidazole-4-carboxamide from 5-amino-1-(5-phospho-D-ribosyl)imidazole-4-carboxylate: step 1/2. The sequence is that of Phosphoribosylaminoimidazole-succinocarboxamide synthase from Streptococcus pneumoniae serotype 2 (strain D39 / NCTC 7466).